A 290-amino-acid chain; its full sequence is Programmed cell death 1 ligand 1 (290 aa).

The signal sequence occupies residues 1-18; sequence MRIFAGIIFTACCHLLRA. The region spanning 19–127 is the Ig-like V-type domain; sequence FTITAPKDLY…YGGADYKRIT (109 aa). Over 19–239 the chain is Extracellular; it reads FTITAPKDLY…ATHPPQNRTH (221 aa). The N-linked (GlcNAc...) asparagine glycan is linked to asparagine 35. Disulfide bonds link cysteine 40–cysteine 114 and cysteine 154–cysteine 208. In terms of domain architecture, Ig-like C2-type spans 133 to 224; the sequence is PYRKINQRIS…PGQNHTAELI (92 aa). 4 N-linked (GlcNAc...) asparagine glycosylation sites follow: asparagine 191, asparagine 199, asparagine 218, and asparagine 236. A helical membrane pass occupies residues 240–260; that stretch reads WVLLGSILLFLIVVSTVLLFL. Topologically, residues 261-290 are cytoplasmic; it reads RKQVRMLDVEKCGVEDTSSKNRNDTQFEET.

The protein belongs to the immunoglobulin superfamily. BTN/MOG family. In terms of assembly, interacts with PDCD1. Interacts with CMTM4 and CMTM6. Interacts with CD80. In terms of processing, ubiquitinated; STUB1 likely mediates polyubiquitination of PD-L1/CD274 triggering its degradation. Ubiquitinated by MARCHF8; leading to degradation. Deubiquitinated by USP22; leading to stabilization. As to expression, highly expressed in the heart, thymus, skeletal muscle, and lung. Weakly expressed in the kidney, spleen, thyroid, and liver. Expressed on activated dendritic cells, B-cells and macrophages. Expressed in numerous tumor cells lines of lymphoid origin.

It localises to the cell membrane. Its subcellular location is the early endosome membrane. It is found in the recycling endosome membrane. Plays a critical role in induction and maintenance of immune tolerance to self. As a ligand for the inhibitory receptor PDCD1/PD-1, modulates the activation threshold of T-cells and limits T-cell effector response. Through a yet unknown activating receptor, may costimulate T-cell subsets that predominantly produce interleukin-10 (IL10). Its function is as follows. The PDCD1-mediated inhibitory pathway is exploited by tumors to attenuate anti-tumor immunity and escape destruction by the immune system, thereby facilitating tumor survival. The interaction with PDCD1/PD-1 inhibits cytotoxic T lymphocytes (CTLs) effector function. The blockage of the PDCD1-mediated pathway results in the reversal of the exhausted T-cell phenotype and the normalization of the anti-tumor response, providing a rationale for cancer immunotherapy. This is Programmed cell death 1 ligand 1 (Cd274) from Mus musculus (Mouse).